The chain runs to 342 residues: Probable tyrosine--tRNA ligase, cytoplasmic (342 aa).

Tyrosine 48 serves as a coordination point for L-tyrosine. Positions 53–61 (ITGKPHIGY) match the 'HIGH' region motif. The L-tyrosine site is built by tyrosine 175, glutamine 179, aspartate 182, and glutamine 197. A 'KMSKS' region motif is present at residues 231–235 (KMSSS).

The protein belongs to the class-I aminoacyl-tRNA synthetase family. As to quaternary structure, homodimer.

It is found in the cytoplasm. The catalysed reaction is tRNA(Tyr) + L-tyrosine + ATP = L-tyrosyl-tRNA(Tyr) + AMP + diphosphate + H(+). The polypeptide is Probable tyrosine--tRNA ligase, cytoplasmic (Enterocytozoon bieneusi (strain H348) (Microsporidian parasite)).